A 576-amino-acid chain; its full sequence is Arginine--tRNA ligase (576 aa).

The short motif at 122–132 is the 'HIGH' region element; sequence PNVAKQMHVGH.

This sequence belongs to the class-I aminoacyl-tRNA synthetase family. In terms of assembly, monomer.

The protein localises to the cytoplasm. The catalysed reaction is tRNA(Arg) + L-arginine + ATP = L-arginyl-tRNA(Arg) + AMP + diphosphate. In Yersinia pseudotuberculosis serotype O:1b (strain IP 31758), this protein is Arginine--tRNA ligase.